Consider the following 168-residue polypeptide: Endoribonuclease YbeY (168 aa).

His-126, His-130, and His-136 together coordinate Zn(2+).

The protein belongs to the endoribonuclease YbeY family. Zn(2+) is required as a cofactor.

Its subcellular location is the cytoplasm. In terms of biological role, single strand-specific metallo-endoribonuclease involved in late-stage 70S ribosome quality control and in maturation of the 3' terminus of the 16S rRNA. This chain is Endoribonuclease YbeY, found in Rhizobium meliloti (strain 1021) (Ensifer meliloti).